The primary structure comprises 459 residues: Arginine biosynthesis bifunctional protein ArgJ, mitochondrial (459 aa).

Threonine 187, lysine 216, threonine 227, glutamate 314, asparagine 454, and threonine 459 together coordinate substrate. The Nucleophile role is filled by threonine 227.

It belongs to the ArgJ family. Heterodimer of an alpha and a beta chain. In terms of processing, the alpha and beta chains are autoproteolytically processed from a single precursor protein within the mitochondrion.

It localises to the mitochondrion matrix. It carries out the reaction N(2)-acetyl-L-ornithine + L-glutamate = N-acetyl-L-glutamate + L-ornithine. The catalysed reaction is L-glutamate + acetyl-CoA = N-acetyl-L-glutamate + CoA + H(+). It functions in the pathway amino-acid biosynthesis; L-arginine biosynthesis; L-ornithine and N-acetyl-L-glutamate from L-glutamate and N(2)-acetyl-L-ornithine (cyclic): step 1/1. It participates in amino-acid biosynthesis; L-arginine biosynthesis; N(2)-acetyl-L-ornithine from L-glutamate: step 1/4. In terms of biological role, catalyzes two activities which are involved in the cyclic version of arginine biosynthesis: the synthesis of acetylglutamate from glutamate and acetyl-CoA, and of ornithine by transacetylation between acetylornithine and glutamate. This Uncinocarpus reesii (strain UAMH 1704) protein is Arginine biosynthesis bifunctional protein ArgJ, mitochondrial.